A 178-amino-acid polypeptide reads, in one-letter code: Large ribosomal subunit protein uL6 (178 aa).

It belongs to the universal ribosomal protein uL6 family. As to quaternary structure, part of the 50S ribosomal subunit.

In terms of biological role, this protein binds to the 23S rRNA, and is important in its secondary structure. It is located near the subunit interface in the base of the L7/L12 stalk, and near the tRNA binding site of the peptidyltransferase center. The sequence is that of Large ribosomal subunit protein uL6 from Streptococcus mutans serotype c (strain ATCC 700610 / UA159).